Consider the following 457-residue polypeptide: MTKKVYVKTFGCQMNEYDSDKMVDVLNAAEGLEKTDTPEDADIILFNTCSVREKAQEKVFSDLGRVRELKEAKPGLLIGVGGCVASQEGASIVSRAPYVDLVFGPQTLHRLPQMIDARRASGRAQVDITFPEIEKFDHLPPARVEGPSAFVSIMEGCSKYCSYCVVPYTRGDEVSRPLDDVLTEVAGLADQGVREVTLLGQNVNAYRGALSAGSADIADFATLIEYVADIPGIERIRYTTSHPKEFTQRLIDTYAKVPKLVSHLHLPVQHGSDRILMAMKRGYTVLEYKSVIRKLRAIRPDLSLSTDMIVGFPGETEDDFDKMMALVHEMSYDTSFSFIYSPRPGTPAANLHDDTPREVKLKRLQHLQATIEENVARISQSMVGKVERILVEGPSRKDPNELSGRTENNRVVNFPAPLASHPRLIGQMIDVKINHAYPHSLRGELLLVSDDASAATH.

The MTTase N-terminal domain occupies 3 to 120 (KKVYVKTFGC…LPQMIDARRA (118 aa)). Positions 12, 49, 83, 157, 161, and 164 each coordinate [4Fe-4S] cluster. Residues 143–377 (RVEGPSAFVS…QATIEENVAR (235 aa)) enclose the Radical SAM core domain. Residues 380 to 447 (QSMVGKVERI…PHSLRGELLL (68 aa)) form the TRAM domain.

It belongs to the methylthiotransferase family. MiaB subfamily. Monomer. [4Fe-4S] cluster serves as cofactor.

The protein localises to the cytoplasm. The catalysed reaction is N(6)-dimethylallyladenosine(37) in tRNA + (sulfur carrier)-SH + AH2 + 2 S-adenosyl-L-methionine = 2-methylsulfanyl-N(6)-dimethylallyladenosine(37) in tRNA + (sulfur carrier)-H + 5'-deoxyadenosine + L-methionine + A + S-adenosyl-L-homocysteine + 2 H(+). Catalyzes the methylthiolation of N6-(dimethylallyl)adenosine (i(6)A), leading to the formation of 2-methylthio-N6-(dimethylallyl)adenosine (ms(2)i(6)A) at position 37 in tRNAs that read codons beginning with uridine. This is tRNA-2-methylthio-N(6)-dimethylallyladenosine synthase from Burkholderia vietnamiensis (strain G4 / LMG 22486) (Burkholderia cepacia (strain R1808)).